The primary structure comprises 70 residues: U2-agatoxin-Ao1d (70 aa).

An N-terminal signal peptide occupies residues 1–20 (MRAIIYLLLISAMVFSMTKA). Residues 21-34 (VPEEEGLQLSEDER) constitute a propeptide that is removed on maturation. Cystine bridges form between cysteine 37–cysteine 53, cysteine 44–cysteine 58, and cysteine 52–cysteine 68. A Leucine amide modification is found at leucine 69.

Belongs to the neurotoxin 01 (U2-agtx) family. In terms of tissue distribution, expressed by the venom gland.

It localises to the secreted. In terms of biological role, insect active toxin causing rapid but reversible paralysis in crickets. No activity shown in mammals. Does not show effect on mammalian voltage-gated calcium channels. This is U2-agatoxin-Ao1d from Agelena orientalis (Funnel-web spider).